The primary structure comprises 527 residues: ATP synthase subunit alpha (527 aa).

Residue 177–184 participates in ATP binding; sequence GDRQTGKT.

Belongs to the ATPase alpha/beta chains family. F-type ATPases have 2 components, CF(1) - the catalytic core - and CF(0) - the membrane proton channel. CF(1) has five subunits: alpha(3), beta(3), gamma(1), delta(1), epsilon(1). CF(0) has four main subunits: a(1), b(1), b'(1) and c(9-12).

Its subcellular location is the cell membrane. The enzyme catalyses ATP + H2O + 4 H(+)(in) = ADP + phosphate + 5 H(+)(out). In terms of biological role, produces ATP from ADP in the presence of a proton gradient across the membrane. The alpha chain is a regulatory subunit. The polypeptide is ATP synthase subunit alpha (Roseiflexus sp. (strain RS-1)).